Consider the following 228-residue polypeptide: Deoxyguanosine kinase (228 aa).

An ATP-binding site is contributed by 8–16; that stretch reads GPIGAGKSS. Substrate-binding residues include Glu-32, Tyr-44, and Gln-55. The active-site Proton acceptor is Asp-78. 3 residues coordinate substrate: Arg-79, Asp-84, and Glu-149.

This sequence belongs to the DCK/DGK family. Heterodimer of a deoxyadenosine (DAK) and a deoxyguanosine kinase (DGK).

The enzyme catalyses 2'-deoxyguanosine + ATP = dGMP + ADP + H(+). DGK/DAK plays an essential role in generating the deoxyribonucleotide precursors, dGTP and dATP, for DNA metabolism. This Lactobacillus acidophilus (strain ATCC 700396 / NCK56 / N2 / NCFM) protein is Deoxyguanosine kinase.